The primary structure comprises 335 residues: Delta(7)-sterol 5(6)-desaturase erg3B (335 aa).

The next 3 helical transmembrane spans lie at 74–94 (IWAFGLLLYLTTASLSFALVF), 113–133 (IGQALRAMPVMAALTAPLFLA), and 152–172 (LYTYLQYPLFIAFTDFAIYWI). One can recognise a Fatty acid hydroxylase domain in the interval 160–284 (LFIAFTDFAI…FITFWDRIGG (125 aa)). Positions 173-177 (HRGLH) match the Histidine box-1 motif. Residues 186 to 190 (HKPHH) carry the Histidine box-2 motif. The chain crosses the membrane as a helical span at residues 219-239 (PFLFPLQKAAYLGLFVFVTIW). N-linked (GlcNAc...) asparagine glycosylation is present at Asn-256. A Histidine box-3 motif is present at residues 261–265 (HTIHH).

Belongs to the sterol desaturase family. The cofactor is Fe cation.

The protein localises to the endoplasmic reticulum membrane. It participates in steroid metabolism; ergosterol biosynthesis. Its function is as follows. Delta(7)-sterol 5(6)-desaturase; part of the third module of ergosterol biosynthesis pathway that includes the late steps of the pathway. Erg3B catalyzes the introduction of a C-5 double bond in the B ring to produce 5-dehydroepisterol. The third module or late pathway involves the ergosterol synthesis itself through consecutive reactions that mainly occur in the endoplasmic reticulum (ER) membrane. Firstly, the squalene synthase erg9 catalyzes the condensation of 2 farnesyl pyrophosphate moieties to form squalene, which is the precursor of all steroids. Squalene synthase is crucial for balancing the incorporation of farnesyl diphosphate (FPP) into sterol and nonsterol isoprene synthesis. Secondly, squalene is converted into lanosterol by the consecutive action of the squalene epoxidase erg1 and the lanosterol synthase erg7. Then, the delta(24)-sterol C-methyltransferase erg6 methylates lanosterol at C-24 to produce eburicol. Eburicol is the substrate of the sterol 14-alpha demethylase encoded by cyp51A and cyp51B, to yield 4,4,24-trimethyl ergosta-8,14,24(28)-trienol. The C-14 reductase erg24 then reduces the C14=C15 double bond which leads to 4,4-dimethylfecosterol. A sequence of further demethylations at C-4, involving the C-4 demethylation complex containing the C-4 methylsterol oxidases erg25A or erg25B, the sterol-4-alpha-carboxylate 3-dehydrogenase erg26 and the 3-keto-steroid reductase erg27, leads to the production of fecosterol via 4-methylfecosterol. The C-8 sterol isomerase erg2 then catalyzes the reaction which results in unsaturation at C-7 in the B ring of sterols and thus converts fecosterol to episterol. The sterol-C5-desaturase erg3B then catalyzes the introduction of a C-5 double bond in the B ring to produce 5-dehydroepisterol. The 2 other sterol-C5-desaturases, erg3A and erg3C, seem to be less important in ergosterol biosynthesis. The C-22 sterol desaturase erg5 further converts 5-dehydroepisterol into ergosta-5,7,22,24(28)-tetraen-3beta-ol by forming the C-22(23) double bond in the sterol side chain. Finally, ergosta-5,7,22,24(28)-tetraen-3beta-ol is substrate of the C-24(28) sterol reductases erg4A and erg4B to produce ergosterol. Possible alternative sterol biosynthetic pathways might exist from fecosterol to ergosterol, depending on the activities of the erg3 isoforms. The polypeptide is Delta(7)-sterol 5(6)-desaturase erg3B (Aspergillus fumigatus (strain ATCC MYA-4609 / CBS 101355 / FGSC A1100 / Af293) (Neosartorya fumigata)).